The chain runs to 120 residues: uncharacterized protein (120 aa).

This is an uncharacterized protein from Archaeoglobus fulgidus (strain ATCC 49558 / DSM 4304 / JCM 9628 / NBRC 100126 / VC-16).